Consider the following 312-residue polypeptide: Very-long-chain 3-oxoacyl-CoA reductase (312 aa).

Residues 4–24 traverse the membrane as a helical segment; sequence APPAAGFLYWVGASTIAYLAL. 50–79 is an NADP(+) binding site; it reads GEWAVVTGGTDGIGKAYAEELAKRGMKIVL. 2 helical membrane-spanning segments follow: residues 182–202 and 269–285; these read GVIL…LTIY and TTGY…NSIM. Position 189 (S189) interacts with substrate. The Proton acceptor role is filled by Y202. The Di-lysine motif motif lies at 308 to 312; sequence KRKKN.

Belongs to the short-chain dehydrogenases/reductases (SDR) family. 17-beta-HSD 3 subfamily. As to expression, expressed in most tissues tested.

Its subcellular location is the endoplasmic reticulum membrane. It catalyses the reaction a very-long-chain (3R)-3-hydroxyacyl-CoA + NADP(+) = a very-long-chain 3-oxoacyl-CoA + NADPH + H(+). The enzyme catalyses 17beta-estradiol + NAD(+) = estrone + NADH + H(+). It carries out the reaction 17beta-estradiol + NADP(+) = estrone + NADPH + H(+). The catalysed reaction is 3-oxooctadecanoyl-CoA + NADPH + H(+) = (3R)-hydroxyoctadecanoyl-CoA + NADP(+). It catalyses the reaction (7Z,10Z,13Z,16Z)-3-oxodocosatetraenoyl-CoA + NADPH + H(+) = (3R)-hydroxy-(7Z,10Z,13Z,16Z)-docosatetraenoyl-CoA + NADP(+). The enzyme catalyses 3-oxo-(7Z,10Z,13Z,16Z,19Z)-docosapentaenoyl-CoA + NADPH + H(+) = (3R)-hydroxy-(7Z,10Z,13Z,16Z,19Z)-docosapentaenoyl-CoA + NADP(+). It carries out the reaction (8Z,11Z,14Z)-3-oxoeicosatrienoyl-CoA + NADPH + H(+) = (3R)-hydroxy-(8Z,11Z,14Z)-eicosatrienoyl-CoA + NADP(+). The protein operates within lipid metabolism; fatty acid biosynthesis. It functions in the pathway steroid biosynthesis; estrogen biosynthesis. Catalyzes the second of the four reactions of the long-chain fatty acids elongation cycle. This endoplasmic reticulum-bound enzymatic process, allows the addition of two carbons to the chain of long- and very long-chain fatty acids/VLCFAs per cycle. This enzyme has a 3-ketoacyl-CoA reductase activity, reducing 3-ketoacyl-CoA to 3-hydroxyacyl-CoA, within each cycle of fatty acid elongation. Thereby, it may participate in the production of VLCFAs of different chain lengths that are involved in multiple biological processes as precursors of membrane lipids and lipid mediators. May also catalyze the transformation of estrone (E1) into estradiol (E2) and play a role in estrogen formation. This Mus musculus (Mouse) protein is Very-long-chain 3-oxoacyl-CoA reductase.